The chain runs to 148 residues: RING finger protein 24 (148 aa).

A helical transmembrane segment spans residues 24 to 44; that stretch reads IYIVVFGTAIFVFILSLLFCC. The RING-type zinc finger occupies 78 to 119; the sequence is CAVCLEDFKPRDELGICPCKHAFHRKCLIKWLEVRKVCPLCN.

As to quaternary structure, interacts with TRPC1, TRPC3, TRPC4, TRPC5, TRPC6 and TRPC7.

It localises to the golgi apparatus membrane. In terms of biological role, may play a role in TRPCs intracellular trafficking. This chain is RING finger protein 24 (RNF24), found in Homo sapiens (Human).